The sequence spans 124 residues: Large ribosomal subunit protein mL51 (124 aa).

The transit peptide at 1–31 (MSVFGGLWRSAVNLCQSSRLFSTGSCARIRM) directs the protein to the mitochondrion.

This sequence belongs to the mitochondrion-specific ribosomal protein mL51 family. As to quaternary structure, component of the mitochondrial ribosome large subunit (39S) which comprises a 16S rRNA and about 50 distinct proteins.

The protein localises to the mitochondrion. The chain is Large ribosomal subunit protein mL51 (mrpl51) from Danio rerio (Zebrafish).